A 181-amino-acid polypeptide reads, in one-letter code: Acireductone dioxygenase (181 aa).

A compositionally biased stretch (acidic residues) spans 1 to 10 (MRAYIYDEES). Residues 1-23 (MRAYIYDEESQLSPQDEHESSQS) form a disordered region. Positions 82, 84, 88, and 128 each coordinate Fe(2+). Ni(2+) is bound by residues histidine 82, histidine 84, glutamate 88, and histidine 128.

The protein belongs to the acireductone dioxygenase (ARD) family. Requires Fe(2+) as cofactor. The cofactor is Ni(2+).

It is found in the cytoplasm. The protein resides in the nucleus. The enzyme catalyses 1,2-dihydroxy-5-(methylsulfanyl)pent-1-en-3-one + O2 = 4-methylsulfanyl-2-oxobutanoate + formate + 2 H(+). It catalyses the reaction 1,2-dihydroxy-5-(methylsulfanyl)pent-1-en-3-one + O2 = 3-(methylsulfanyl)propanoate + CO + formate + 2 H(+). The protein operates within amino-acid biosynthesis; L-methionine biosynthesis via salvage pathway; L-methionine from S-methyl-5-thio-alpha-D-ribose 1-phosphate: step 5/6. Catalyzes 2 different reactions between oxygen and the acireductone 1,2-dihydroxy-3-keto-5-methylthiopentene (DHK-MTPene) depending upon the metal bound in the active site. Fe-containing acireductone dioxygenase (Fe-ARD) produces formate and 2-keto-4-methylthiobutyrate (KMTB), the alpha-ketoacid precursor of methionine in the methionine recycle pathway. Ni-containing acireductone dioxygenase (Ni-ARD) produces methylthiopropionate, carbon monoxide and formate, and does not lie on the methionine recycle pathway. The protein is Acireductone dioxygenase of Puccinia graminis f. sp. tritici (strain CRL 75-36-700-3 / race SCCL) (Black stem rust fungus).